The chain runs to 360 residues: DNA replication and repair protein RecF (360 aa).

Residue 30–37 participates in ATP binding; that stretch reads GDNAQGKT.

Belongs to the RecF family.

The protein resides in the cytoplasm. In terms of biological role, the RecF protein is involved in DNA metabolism; it is required for DNA replication and normal SOS inducibility. RecF binds preferentially to single-stranded, linear DNA. It also seems to bind ATP. The chain is DNA replication and repair protein RecF from Lachnoclostridium phytofermentans (strain ATCC 700394 / DSM 18823 / ISDg) (Clostridium phytofermentans).